Here is a 262-residue protein sequence, read N- to C-terminus: Phosphoribosylformylglycinamidine synthase subunit PurQ (262 aa).

The 237-residue stretch at 2 to 238 (RIAVIQFPGT…FAWQLPRKHP (237 aa)) folds into the Glutamine amidotransferase type-1 domain. The active-site Nucleophile is Cys-87. Residues His-223 and Glu-225 contribute to the active site.

As to quaternary structure, part of the FGAM synthase complex composed of 1 PurL, 1 PurQ and 2 PurS subunits.

The protein localises to the cytoplasm. It carries out the reaction N(2)-formyl-N(1)-(5-phospho-beta-D-ribosyl)glycinamide + L-glutamine + ATP + H2O = 2-formamido-N(1)-(5-O-phospho-beta-D-ribosyl)acetamidine + L-glutamate + ADP + phosphate + H(+). It catalyses the reaction L-glutamine + H2O = L-glutamate + NH4(+). Its pathway is purine metabolism; IMP biosynthesis via de novo pathway; 5-amino-1-(5-phospho-D-ribosyl)imidazole from N(2)-formyl-N(1)-(5-phospho-D-ribosyl)glycinamide: step 1/2. Part of the phosphoribosylformylglycinamidine synthase complex involved in the purines biosynthetic pathway. Catalyzes the ATP-dependent conversion of formylglycinamide ribonucleotide (FGAR) and glutamine to yield formylglycinamidine ribonucleotide (FGAM) and glutamate. The FGAM synthase complex is composed of three subunits. PurQ produces an ammonia molecule by converting glutamine to glutamate. PurL transfers the ammonia molecule to FGAR to form FGAM in an ATP-dependent manner. PurS interacts with PurQ and PurL and is thought to assist in the transfer of the ammonia molecule from PurQ to PurL. This is Phosphoribosylformylglycinamidine synthase subunit PurQ from Methanothrix thermoacetophila (strain DSM 6194 / JCM 14653 / NBRC 101360 / PT) (Methanosaeta thermophila).